A 446-amino-acid polypeptide reads, in one-letter code: Glutamyl-tRNA reductase 2 (446 aa).

Residues 53 to 56 (TCNR), serine 105, 110 to 112 (EQQ), and glutamine 116 each bind substrate. The active-site Nucleophile is the cysteine 54. 185-190 (GAGKMG) lines the NADP(+) pocket. The disordered stretch occupies residues 409–446 (AAELFGIENETAGGERREGGAEGAAAAPGAGPVRSQGT). Low complexity predominate over residues 431 to 440 (GAAAAPGAGP).

Belongs to the glutamyl-tRNA reductase family. In terms of assembly, homodimer.

The catalysed reaction is (S)-4-amino-5-oxopentanoate + tRNA(Glu) + NADP(+) = L-glutamyl-tRNA(Glu) + NADPH + H(+). The protein operates within porphyrin-containing compound metabolism; protoporphyrin-IX biosynthesis; 5-aminolevulinate from L-glutamyl-tRNA(Glu): step 1/2. Functionally, catalyzes the NADPH-dependent reduction of glutamyl-tRNA(Glu) to glutamate 1-semialdehyde (GSA). This is Glutamyl-tRNA reductase 2 from Anaeromyxobacter dehalogenans (strain 2CP-C).